Reading from the N-terminus, the 130-residue chain is Ribonuclease VapC22 (130 aa).

Residues 4–119 enclose the PINc domain; sequence VLLDSHVAYW…RLVTKDRRLR (116 aa). Positions 7 and 97 each coordinate Mg(2+).

It belongs to the PINc/VapC protein family. The cofactor is Mg(2+).

It is found in the secreted. Its function is as follows. Toxic component of a type II toxin-antitoxin (TA) system. An RNase. Upon expression in M.smegmatis inhibits translation and colony formation. Its toxic effect on colony formation is neutralized by coexpression with cognate antitoxin VapB22; the effect on translation has not been tested but is probably neutralized also. The protein is Ribonuclease VapC22 of Mycobacterium tuberculosis (strain ATCC 25618 / H37Rv).